A 427-amino-acid chain; its full sequence is Serine--tRNA ligase (427 aa).

231 to 233 (TAE) lines the L-serine pocket. 262-264 (RSE) is a binding site for ATP. E285 provides a ligand contact to L-serine. 349-352 (EISS) lines the ATP pocket. Residue S385 coordinates L-serine.

Belongs to the class-II aminoacyl-tRNA synthetase family. Type-1 seryl-tRNA synthetase subfamily. In terms of assembly, homodimer. The tRNA molecule binds across the dimer.

It is found in the cytoplasm. It carries out the reaction tRNA(Ser) + L-serine + ATP = L-seryl-tRNA(Ser) + AMP + diphosphate + H(+). The enzyme catalyses tRNA(Sec) + L-serine + ATP = L-seryl-tRNA(Sec) + AMP + diphosphate + H(+). The protein operates within aminoacyl-tRNA biosynthesis; selenocysteinyl-tRNA(Sec) biosynthesis; L-seryl-tRNA(Sec) from L-serine and tRNA(Sec): step 1/1. Its function is as follows. Catalyzes the attachment of serine to tRNA(Ser). Is also able to aminoacylate tRNA(Sec) with serine, to form the misacylated tRNA L-seryl-tRNA(Sec), which will be further converted into selenocysteinyl-tRNA(Sec). The protein is Serine--tRNA ligase of Methylococcus capsulatus (strain ATCC 33009 / NCIMB 11132 / Bath).